A 96-amino-acid chain; its full sequence is Muconolactone Delta-isomerase (96 aa).

This sequence belongs to the muconolactone Delta-isomerase family. Homodecamer.

It carries out the reaction (S)-muconolactone = (4,5-dihydro-5-oxofuran-2-yl)-acetate. The protein operates within aromatic compound metabolism; beta-ketoadipate pathway; 5-oxo-4,5-dihydro-2-furylacetate from catechol: step 3/3. The polypeptide is Muconolactone Delta-isomerase (catC) (Pseudomonas aeruginosa (strain ATCC 15692 / DSM 22644 / CIP 104116 / JCM 14847 / LMG 12228 / 1C / PRS 101 / PAO1)).